A 339-amino-acid polypeptide reads, in one-letter code: Serine/threonine-protein kinase SRK2J (339 aa).

The Protein kinase domain occupies 4–260 (YEMVKDLGFG…LKEIKSHAWF (257 aa)). ATP is bound by residues 10–18 (LGFGNFGLA) and Lys33. Asp123 acts as the Proton acceptor in catalysis. Residues 308-339 (SRPVESLGSDKKDDDEEEYLDANDEEWYDDYA) are disordered. Positions 320-339 (DDDEEEYLDANDEEWYDDYA) are enriched in acidic residues.

It belongs to the protein kinase superfamily. Ser/Thr protein kinase family. As to expression, expressed in seedlings.

The enzyme catalyses L-seryl-[protein] + ATP = O-phospho-L-seryl-[protein] + ADP + H(+). The catalysed reaction is L-threonyl-[protein] + ATP = O-phospho-L-threonyl-[protein] + ADP + H(+). The chain is Serine/threonine-protein kinase SRK2J (SRK2J) from Arabidopsis thaliana (Mouse-ear cress).